The following is a 290-amino-acid chain: Small ribosomal subunit biogenesis GTPase RsgA (290 aa).

A CP-type G domain is found at 62–213 (KNSLVRPPIV…IADTPGFSSL (152 aa)). Residues 111–114 (SKTD) and 156–164 (GQTGVGKTT) contribute to the GTP site. Cys-237, Cys-242, His-244, and Cys-250 together coordinate Zn(2+).

It belongs to the TRAFAC class YlqF/YawG GTPase family. RsgA subfamily. As to quaternary structure, monomer. Associates with 30S ribosomal subunit, binds 16S rRNA. Zn(2+) serves as cofactor.

The protein localises to the cytoplasm. In terms of biological role, one of several proteins that assist in the late maturation steps of the functional core of the 30S ribosomal subunit. Helps release RbfA from mature subunits. May play a role in the assembly of ribosomal proteins into the subunit. Circularly permuted GTPase that catalyzes slow GTP hydrolysis, GTPase activity is stimulated by the 30S ribosomal subunit. In Streptococcus mutans serotype c (strain ATCC 700610 / UA159), this protein is Small ribosomal subunit biogenesis GTPase RsgA.